The primary structure comprises 316 residues: Transaldolase 2 (316 aa).

Catalysis depends on lysine 131, which acts as the Schiff-base intermediate with substrate.

It belongs to the transaldolase family. Type 1 subfamily. As to quaternary structure, homodimer.

It localises to the cytoplasm. It catalyses the reaction D-sedoheptulose 7-phosphate + D-glyceraldehyde 3-phosphate = D-erythrose 4-phosphate + beta-D-fructose 6-phosphate. It participates in carbohydrate degradation; pentose phosphate pathway; D-glyceraldehyde 3-phosphate and beta-D-fructose 6-phosphate from D-ribose 5-phosphate and D-xylulose 5-phosphate (non-oxidative stage): step 2/3. Functionally, transaldolase is important for the balance of metabolites in the pentose-phosphate pathway. In Shigella sonnei (strain Ss046), this protein is Transaldolase 2.